Reading from the N-terminus, the 157-residue chain is UPF0262 protein RHE_CH00582 (157 aa).

This sequence belongs to the UPF0262 family.

The protein is UPF0262 protein RHE_CH00582 of Rhizobium etli (strain ATCC 51251 / DSM 11541 / JCM 21823 / NBRC 15573 / CFN 42).